The chain runs to 158 residues: Methylated-DNA--protein-cysteine methyltransferase (158 aa).

Residue cysteine 126 is the Nucleophile; methyl group acceptor of the active site.

Belongs to the MGMT family.

It is found in the cytoplasm. The enzyme catalyses a 6-O-methyl-2'-deoxyguanosine in DNA + L-cysteinyl-[protein] = S-methyl-L-cysteinyl-[protein] + a 2'-deoxyguanosine in DNA. It carries out the reaction a 4-O-methyl-thymidine in DNA + L-cysteinyl-[protein] = a thymidine in DNA + S-methyl-L-cysteinyl-[protein]. Functionally, involved in the cellular defense against the biological effects of O6-methylguanine (O6-MeG) and O4-methylthymine (O4-MeT) in DNA. Repairs the methylated nucleobase in DNA by stoichiometrically transferring the methyl group to a cysteine residue in the enzyme. This is a suicide reaction: the enzyme is irreversibly inactivated. The chain is Methylated-DNA--protein-cysteine methyltransferase from Methanosarcina barkeri (strain Fusaro / DSM 804).